Consider the following 473-residue polypeptide: Ribulose bisphosphate carboxylase large chain (473 aa).

Residues Asn116 and Thr166 each contribute to the substrate site. Residue Lys168 is the Proton acceptor of the active site. Lys170 contacts substrate. Residues Lys194, Asp196, and Glu197 each coordinate Mg(2+). Lys194 is subject to N6-carboxylysine. Residue His287 is the Proton acceptor of the active site. Arg288, His320, and Ser372 together coordinate substrate.

Belongs to the RuBisCO large chain family. Type I subfamily. In terms of assembly, heterohexadecamer of 8 large chains and 8 small chains. In R.sphaeroides the complex is approximately 500 kDa. The cofactor is Mg(2+).

The catalysed reaction is 2 (2R)-3-phosphoglycerate + 2 H(+) = D-ribulose 1,5-bisphosphate + CO2 + H2O. It carries out the reaction D-ribulose 1,5-bisphosphate + O2 = 2-phosphoglycolate + (2R)-3-phosphoglycerate + 2 H(+). Functionally, ruBisCO catalyzes two reactions: the carboxylation of D-ribulose 1,5-bisphosphate, the primary event in carbon dioxide fixation, as well as the oxidative fragmentation of the pentose substrate. Both reactions occur simultaneously and in competition at the same active site. This chain is Ribulose bisphosphate carboxylase large chain, found in Thiobacillus denitrificans (strain ATCC 25259 / T1).